The sequence spans 362 residues: D-alanine--D-alanine ligase (362 aa).

One can recognise an ATP-grasp domain in the interval 134–345; it reads KILAQRAGVP…YPDLITRLIR (212 aa). 170 to 225 serves as a coordination point for ATP; it reads GQLGTSNLFVKPSNQGSSVGITHVTDDSNYAEALAEAFKYDDKVLVEEGIVGTEVE. Mg(2+)-binding residues include D298, E312, and N314.

This sequence belongs to the D-alanine--D-alanine ligase family. It depends on Mg(2+) as a cofactor. Mn(2+) is required as a cofactor.

Its subcellular location is the cytoplasm. The enzyme catalyses 2 D-alanine + ATP = D-alanyl-D-alanine + ADP + phosphate + H(+). The protein operates within cell wall biogenesis; peptidoglycan biosynthesis. Functionally, cell wall formation. The chain is D-alanine--D-alanine ligase from Lactobacillus delbrueckii subsp. bulgaricus (strain ATCC 11842 / DSM 20081 / BCRC 10696 / JCM 1002 / NBRC 13953 / NCIMB 11778 / NCTC 12712 / WDCM 00102 / Lb 14).